A 463-amino-acid chain; its full sequence is Retinoic acid receptor RXR-gamma (463 aa).

The tract at residues 1–138 (MYGNYSHFMK…TSPGSLVKHI (138 aa)) is modulating. A disordered region spans residues 16 to 53 (GGSPGHTGSTSMSPSVALPTGKPMDSHPSYTDTPVSAP). 2 NR C4-type zinc fingers span residues 139–159 (CAIC…CEGC) and 175–199 (CRDN…YQKC). Residues 139 to 204 (CAICGDRSSG…RYQKCLVMGM (66 aa)) constitute a DNA-binding region (nuclear receptor). The hinge stretch occupies residues 205–230 (KREAVQEERQRSRERAESEAECASSS). Residues 211–222 (EERQRSRERAES) are compositionally biased toward basic and acidic residues. Positions 211–232 (EERQRSRERAESEAECASSSHE) are disordered. The NR LBD domain maps to 231 to 459 (HEDMPVERIL…SFLMEMLETP (229 aa)).

This sequence belongs to the nuclear hormone receptor family. NR2 subfamily. As to quaternary structure, homodimer. Heterodimer with a RAR molecule. Binds DNA preferentially as a RAR/RXR heterodimer. Interacts with RARA. Post-translationally, acetylated by EP300.

Its subcellular location is the nucleus. It localises to the cytoplasm. Functionally, receptor for retinoic acid. Retinoic acid receptors bind as heterodimers to their target response elements in response to their ligands, all-trans or 9-cis retinoic acid, and regulate gene expression in various biological processes. The RAR/RXR heterodimers bind to the retinoic acid response elements (RARE) composed of tandem 5'-AGGTCA-3' sites known as DR1-DR5. The high affinity ligand for RXRs is 9-cis retinoic acid. The protein is Retinoic acid receptor RXR-gamma (Rxrg) of Mus musculus (Mouse).